A 190-amino-acid chain; its full sequence is TATA box-binding protein-like 1 (190 aa).

The protein belongs to the TBP family. In terms of assembly, binds TFIIA and TFIIB.

The protein resides in the cytoplasm. The protein localises to the nucleus. In terms of biological role, part of a specialized transcription system that mediates the transcription of most ribosomal proteins through the 5'-TCT-3' motif which is a core promoter element at these genes. Seems to also mediate the transcription of NF1. Does not bind the TATA box. The sequence is that of TATA box-binding protein-like 1 (TBPL1) from Pongo abelii (Sumatran orangutan).